The chain runs to 1331 residues: Sodium-dependent transporter bedraggled (1331 aa).

The interval 1–62 (MSSKEQQAAG…QLEHEQFGLS (62 aa)) is disordered. Residues 16–25 (NSNAYSSLPP) show a composition bias toward polar residues. The segment covering 28–43 (TGAGCSGAALGSGTGT) has biased composition (gly residues). Asparagine 168 is a glycosylation site (N-linked (GlcNAc...) asparagine). Disordered stretches follow at residues 221-284 (EPRT…TEPV) and 363-473 (QTNA…SASS). Residues 258–282 (KTFSCSLRPTSQIASSSGSLETSTE) are compositionally biased toward polar residues. Residues 369-383 (SSEEPRPRQYGRRLE) show a composition bias toward basic and acidic residues. Residues 413-436 (LQDTPTHPIMSTCSELSSARSSRM) show a composition bias toward polar residues. Over residues 437–453 (PSPVSLPSDSSSSGSSS) the composition is skewed to low complexity. Residues 463-473 (VQTTTMCSASS) show a composition bias toward polar residues. 3 consecutive transmembrane segments (helical) span residues 505 to 525 (LALIGCTLGVFNMCRFAVLTI), 531 to 551 (FLLQFLLLSVIFGIPLLWLQM), and 567 to 587 (ISPICAGVGIALVMQQCFLAL). N-linked (GlcNAc...) asparagine glycosylation is found at asparagine 627 and asparagine 631. A run of 4 helical transmembrane segments spans residues 667 to 687 (QLAFYLALIWAAVFLILCKGL), 696 to 716 (IIYTLPLVALAVVTAKFVYVV), 741 to 761 (TAATQETFLTWGLLGASVIAI), and 778 to 798 (AILLVLFTLIGLGLMALLALC). Residue asparagine 857 is glycosylated (N-linked (GlcNAc...) asparagine). The helical transmembrane segment at 890–910 (WVWAAVAFATFAGFGLAQLCV) threads the bilayer. Asparagine 921 carries N-linked (GlcNAc...) asparagine glycosylation. 4 helical membrane passes run 926 to 946 (VLLSCVTGLLLSIPFATEMGI), 956 to 976 (LGGSWFIPIIWTAQIFGVFLI), 998 to 1018 (AFLALSWNVLLPIGLITLSVV), and 1044 to 1064 (MGSLIQIGVLLVIPVTAIIQI). 3 disordered regions span residues 1086–1136 (PEEG…SYTT), 1169–1238 (SLDA…ASTL), and 1256–1275 (VRHRQSQGGGNLVTASTLPR). Polar residues-rich tracts occupy residues 1097 to 1115 (ARQTASQSRRNALGQTTEG) and 1186 to 1196 (ILTNPAGSSFN). Positions 1197–1209 (ADPSPASSSSPES) are enriched in low complexity.

This sequence belongs to the sodium:neurotransmitter symporter (SNF) (TC 2.A.22) family.

Its subcellular location is the membrane. In terms of biological role, putative sodium-dependent transporter which is required for viability, early imaginal disk development and adult motor coordination. Also has a role in the fate commitment of the R3/R4 photoreceptor cells. May function in ommatidial polarity by regulating the activity of the core polarity genes, acting upstream of (or in parallel to) Vang, dsh, pk, stan, and dgo, but downstream or independently of fz. This Drosophila melanogaster (Fruit fly) protein is Sodium-dependent transporter bedraggled.